The primary structure comprises 137 residues: Histone H2B (137 aa).

The segment covering 1-10 has biased composition (basic and acidic residues); the sequence is MPPKAADKKP. Residues 1–45 form a disordered region; sequence MPPKAADKKPASKAPATASKAPEKKDAGKKTAASGDKKKRTKTRK. Residues Lys-8 and Lys-9 each carry the N6-acetyllysine; alternate modification. Glycyl lysine isopeptide (Lys-Gly) (interchain with G-Cter in SUMO); alternate cross-links involve residues Lys-8 and Lys-9. Residue Ser-12 is modified to Phosphoserine. At Lys-13 the chain carries N6-acetyllysine. Lys-24 carries the post-translational modification N6-acetyllysine; alternate. Lys-24 participates in a covalent cross-link: Glycyl lysine isopeptide (Lys-Gly) (interchain with G-Cter in SUMO); alternate. A Glycyl lysine isopeptide (Lys-Gly) (interchain with G-Cter in SUMO) cross-link involves residue Lys-25. A Glycyl lysine isopeptide (Lys-Gly) (interchain with G-Cter in ubiquitin) cross-link involves residue Lys-131.

The protein belongs to the histone H2B family. As to quaternary structure, the nucleosome is a histone octamer containing two molecules each of H2A, H2B, H3 and H4 assembled in one H3-H4 heterotetramer and two H2A-H2B heterodimers. The octamer wraps approximately 147 bp of DNA. Monoubiquitinated by the UBC2-BRE1 complex to form H2BK123ub1. H2BK123ub1 gives a specific tag for epigenetic transcriptional activation and is also prerequisite for H3K4me and H3K79me formation. H2BK123ub1 also modulates the formation of double-strand breaks during meiosis and is a prerequisite for DNA-damage checkpoint activation. In terms of processing, phosphorylated by STE20 to form H2BS10ph during progression through meiotic prophase. May be correlated with chromosome condensation. Post-translationally, acetylated by GCN5 to form H2BK11ac and H2BK16ac. H2BK16ac can also be formed by ESA1. Acetylation of N-terminal lysines and particularly formation of H2BK11acK16ac has a positive effect on transcription. Sumoylation to form H2BK6su or H2BK7su, and probably also H2BK16su or H2BK17su, occurs preferentially near the telomeres and represses gene transcription.

The protein resides in the nucleus. It is found in the chromosome. Its function is as follows. Core component of nucleosome. Nucleosomes wrap and compact DNA into chromatin, limiting DNA accessibility to the cellular machineries which require DNA as a template. Histones thereby play a central role in transcription regulation, DNA repair, DNA replication and chromosomal stability. DNA accessibility is regulated via a complex set of post-translational modifications of histones, also called histone code, and nucleosome remodeling. This Pyricularia oryzae (strain Y34) (Rice blast fungus) protein is Histone H2B (HTB1).